We begin with the raw amino-acid sequence, 223 residues long: Large ribosomal subunit protein bL21 (223 aa).

It belongs to the bacterial ribosomal protein bL21 family. In terms of assembly, part of the 50S ribosomal subunit. Contacts protein L20.

Functionally, this protein binds to 23S rRNA in the presence of protein L20. The polypeptide is Large ribosomal subunit protein bL21 (Mesorhizobium japonicum (strain LMG 29417 / CECT 9101 / MAFF 303099) (Mesorhizobium loti (strain MAFF 303099))).